The primary structure comprises 515 residues: MNKTIAVIGAGLSGIAAVKQLTDGGHQVTCFEKAESFGGVFADKKIYDDLHLTISNYFMAYSDYVPNHQKLKFWSKKEYINYLGEYIERFDIAKHIHYDHEVCCVQKQGDKWLVTYKNADTEQTKEFDMVAVCSGHFQKPKLPDLPGLDMYQGNIEHSNDYRDKHNYAGKRVLCVGLGESSADITSEISQVARKCILSLRRYPAVAPRYMAFQEDPYFTIDTSWLTSRIVNKLPHRYHGGITKGIFNKYVTSRNDHVRIRGEWLKKSGPSHHQAVTKNERLFRPIADGKVTPNIGGIERFEKNAVVFKDGTREEIDAVVFCTGYQLSFPFLDVSIANMRDLYKQMFIPEMGHSLSFIGFVRPQQGGIPVIAEMQCRYLSKLASGEAQLPTLSEMHDVIKYDTKHWQTEYKITPHVASLVNYCHYMDSVAKLVGCMPQIPSLFKDPMLRVKLLHNPQFAAQYRLDGPNNMTHTAREFLLSFPNISSWPRIIHFEVALAAQKLLSRLRLDGLREISK.

FAD-binding residues include S13, E32, V40, F41, H51, V102, and Q364.

It belongs to the FMO family. It depends on FAD as a cofactor.

The enzyme catalyses 2 bromide + 4-hydroxybenzoate + 2 NADPH + 2 O2 + 5 H(+) = 2,4-dibromophenol + CO2 + 2 NADP(+) + 4 H2O. The catalysed reaction is bromide + 4-hydroxybenzoate + NADPH + O2 + 2 H(+) = 3-bromo-4-hydroxybenzoate + NADP(+) + 2 H2O. It catalyses the reaction 3-bromo-4-hydroxybenzoate + bromide + NADPH + O2 + 3 H(+) = 2,4-dibromophenol + CO2 + NADP(+) + 2 H2O. It carries out the reaction 3,4-dihydroxybenzoate + 2 bromide + 2 NADPH + 2 O2 + 5 H(+) = 3,5-dibromobenzene-1,2-diol + CO2 + 2 NADP(+) + 4 H2O. The enzyme catalyses 3,4-dihydroxybenzoate + bromide + NADPH + O2 + 2 H(+) = 3-bromo-4,5-dihydroxybenzoate + NADP(+) + 2 H2O. The catalysed reaction is 3-bromo-4,5-dihydroxybenzoate + bromide + NADPH + O2 + 3 H(+) = 3,5-dibromobenzene-1,2-diol + CO2 + NADP(+) + 2 H2O. Its activity is regulated as follows. Activity is abolished in the absence of either bromide or NADPH, while a partial reduction in activity is observed upon omission of FAD. Activity does not require the addition of a flavin reductase to regenerate FADH(2) in situ. In terms of biological role, brominase involved in the biosynthesis of polybrominated aromatic organic compounds. Catalyzes the bromination of 4-hydroxybenzoate (4-HBA) to 3-bromo-4-hydroxybenzoate, followed by bromination and decarboxylation of 3-bromo-4-hydroxybenzoate to 2,4-dibromophenol. Can also use 3,4-dihydroxybenzoate, with lower efficiency, forming 3-bromo-4,5-dihydroxybenzoate and 3,5-dibromobenzene-1,2-diol. Can utilize iodide in vivo leading to the formation of iodophenols, but cannot use chloride. The polypeptide is 4-hydroxybenzoate brominase (decarboxylating) (Pseudoalteromonas luteoviolacea (strain 2ta16)).